Here is a 500-residue protein sequence, read N- to C-terminus: MTHTIKKMSLIGLILMIFTSVFGFANSPSAFYLMGYSAIPWYIFSALLFFIPFALMMAEMGSAYRKEEGGIYSWMNNSVGPRYAFIGTFMWFSSYVIWMVSTAAKIWVPFSTFVFGADMTQHWRIAGLEPTQVVGLLAVGWMILVTCVAARGINKIARITAVGGIAVMCLNLVLLLVSVAILLLNGGHFAQEINFTSSPNPGYHSGLAMLSFVVFAIFAYGGIEAVGGLVDKTEKPEKNFAKGIVFAAIVISIGYSLAIFLWGVSTNWQQILSNSAVNLGNITYILMSSLGTTLGNALNLSPEAAMTVGVWFARITGLSMFLAYTGAFFTLSYSPLKAIIQGTPKALWPAPMTTLNANGMPATAMWLQCVLVSLFILLVSFGGDTASAFYNKLTLMANVSMTLPYLFLALAFPFFKARQDLERPFVLFKTKASTLVATGVVVLVVTFANVFTIIQPVIEAGDWDSALWMIGGPIFFSLLAMAIYQNYSSRMSADPEWAAE.

The Cytoplasmic segment spans residues M1–L10. A helical transmembrane segment spans residues I11–F31. Over Y32–S37 the chain is Periplasmic. The chain crosses the membrane as a helical span at residues A38–A58. The Cytoplasmic segment spans residues E59–Y83. Residues A84 to A104 form a helical membrane-spanning segment. Residues K105–R124 are Periplasmic-facing. The chain crosses the membrane as a helical span at residues I125 to V145. The Cytoplasmic segment spans residues T146–G163. The helical transmembrane segment at G164–L184 threads the bilayer. Topologically, residues N185–M209 are periplasmic. A helical membrane pass occupies residues L210–V230. Over D231–G243 the chain is Cytoplasmic. Residues I244–V264 traverse the membrane as a helical segment. The Periplasmic segment spans residues S265–V308. The chain crosses the membrane as a helical span at residues G309 to F329. At T330 to P361 the chain is on the cytoplasmic side. Residues A362–G382 traverse the membrane as a helical segment. Residues G383–T394 are Periplasmic-facing. Residues L395–F415 traverse the membrane as a helical segment. At K416–S433 the chain is on the cytoplasmic side. The helical transmembrane segment at T434–I454 threads the bilayer. The Periplasmic segment spans residues Q455–D462. Residues W463–I483 form a helical membrane-spanning segment. At Y484–E500 the chain is on the cytoplasmic side.

This sequence belongs to the amino acid-polyamine-organocation (APC) superfamily.

It localises to the cell inner membrane. In Salmonella typhi, this protein is Inner membrane transporter YjeM (yjeM).